The chain runs to 242 residues: MTHSPLAQFDIKKLIDIKMFGFDVSFTNSSIYMLLASILALTYFYLAFYNRKLVPSRLQVSAEIVYNLVADMLNQNIGVKGRKFIPLIFSLFIFILFCNLLGMTPYSFTTTSHIIVTFTLAILVFLMVTIVGFVKHGLRFLTLFLPHGTPLWLAPLMIVIELFTYLARPVSLSLRLAANMMAGHVLLKVIAGFTVSLMIYLKFLPIPIMVILIGFEIFVAILQAYIFTILSCMYLNDVINLH.

The next 6 membrane-spanning stretches (helical) occupy residues 29 to 49 (SSIY…LAFY), 84 to 104 (FIPL…LGMT), 114 to 134 (IIVT…VGFV), 140 to 160 (FLTL…MIVI), 181 to 201 (MAGH…MIYL), and 203 to 223 (FLPI…AILQ).

This sequence belongs to the ATPase A chain family. F-type ATPases have 2 components, CF(1) - the catalytic core - and CF(0) - the membrane proton channel. CF(1) has five subunits: alpha(3), beta(3), gamma(1), delta(1), epsilon(1). CF(0) has three main subunits: a(1), b(2) and c(9-12). The alpha and beta chains form an alternating ring which encloses part of the gamma chain. CF(1) is attached to CF(0) by a central stalk formed by the gamma and epsilon chains, while a peripheral stalk is formed by the delta and b chains.

Its subcellular location is the cell membrane. In terms of biological role, key component of the proton channel; it plays a direct role in the translocation of protons across the membrane. The protein is ATP synthase subunit a of Rickettsia africae (strain ESF-5).